A 392-amino-acid polypeptide reads, in one-letter code: Leucine-rich repeat-containing protein 74B (392 aa).

The interval 24-46 is disordered; the sequence is RLSGVPEAEQGPEANWDSDLETE. LRR repeat units lie at residues 106-129, 134-157, 162-185, 192-213, 220-241, 248-269, 276-297, 304-325, and 334-356; these read NPYV…ALAG, SSSI…ALCA, NQAM…HLAE, DLKS…TLGP, GLTE…AFAR, FLKV…AVGE, VLEE…SLGL, TLRI…GLLK, and ALEL…ASSV.

In Homo sapiens (Human), this protein is Leucine-rich repeat-containing protein 74B.